A 264-amino-acid chain; its full sequence is Small ribosomal subunit protein eS1 (264 aa).

K34 is subject to N6-acetyllysine; alternate. Residue K34 forms a Glycyl lysine isopeptide (Lys-Gly) (interchain with G-Cter in SUMO2); alternate linkage. Residue K56 is modified to N6-acetyllysine. Y155 bears the ADP-ribosyltyrosine mark. The interval H232–V264 is disordered. Residues S236 and S237 each carry the phosphoserine modification. A compositionally biased stretch (basic and acidic residues) spans T242–G255. K249 bears the N6-acetyllysine; alternate mark. A Glycyl lysine isopeptide (Lys-Gly) (interchain with G-Cter in SUMO2); alternate cross-link involves residue K249. Y256 is modified (phosphotyrosine). The residue at position 263 (S263) is a Phosphoserine.

The protein belongs to the eukaryotic ribosomal protein eS1 family. As to quaternary structure, component of the small ribosomal subunit. Mature ribosomes consist of a small (40S) and a large (60S) subunit. The 40S subunit contains about 33 different proteins and 1 molecule of RNA (18S). The 60S subunit contains about 49 different proteins and 3 molecules of RNA (28S, 5.8S and 5S). Identified in a IGF2BP1-dependent mRNP granule complex containing untranslated mRNAs. Binds with high affinity to IPO4. Interacts with DDIT3. Part of the small subunit (SSU) processome, composed of more than 70 proteins and the RNA chaperone small nucleolar RNA (snoRNA) U3. Post-translationally, ADP-ribosylated at Tyr-155 by PARP1 in presence of HPF1.

The protein localises to the cytoplasm. Its subcellular location is the nucleus. The protein resides in the nucleolus. Component of the small ribosomal subunit. The ribosome is a large ribonucleoprotein complex responsible for the synthesis of proteins in the cell. Part of the small subunit (SSU) processome, first precursor of the small eukaryotic ribosomal subunit. During the assembly of the SSU processome in the nucleolus, many ribosome biogenesis factors, an RNA chaperone and ribosomal proteins associate with the nascent pre-rRNA and work in concert to generate RNA folding, modifications, rearrangements and cleavage as well as targeted degradation of pre-ribosomal RNA by the RNA exosome. May play a role during erythropoiesis through regulation of transcription factor DDIT3. This is Small ribosomal subunit protein eS1 from Bos taurus (Bovine).